A 239-amino-acid chain; its full sequence is Putative glutamine amidotransferase-like protein YfeJ (239 aa).

One can recognise a Glutamine amidotransferase type-1 domain in the interval Met1 to Asp200.

The polypeptide is Putative glutamine amidotransferase-like protein YfeJ (yfeJ) (Salmonella typhimurium (strain LT2 / SGSC1412 / ATCC 700720)).